We begin with the raw amino-acid sequence, 418 residues long: UDP-N-acetylglucosamine 1-carboxyvinyltransferase (418 aa).

Phosphoenolpyruvate is bound at residue 22–23; that stretch reads KN. UDP-N-acetyl-alpha-D-glucosamine is bound at residue R93. The active-site Proton donor is C117. Position 117 is a 2-(S-cysteinyl)pyruvic acid O-phosphothioketal (C117). UDP-N-acetyl-alpha-D-glucosamine contacts are provided by residues 122–126, D306, and L328; that span reads RPIDL.

The protein belongs to the EPSP synthase family. MurA subfamily.

It localises to the cytoplasm. The enzyme catalyses phosphoenolpyruvate + UDP-N-acetyl-alpha-D-glucosamine = UDP-N-acetyl-3-O-(1-carboxyvinyl)-alpha-D-glucosamine + phosphate. Its pathway is cell wall biogenesis; peptidoglycan biosynthesis. Its function is as follows. Cell wall formation. Adds enolpyruvyl to UDP-N-acetylglucosamine. The polypeptide is UDP-N-acetylglucosamine 1-carboxyvinyltransferase (Campylobacter hominis (strain ATCC BAA-381 / DSM 21671 / CCUG 45161 / LMG 19568 / NCTC 13146 / CH001A)).